Consider the following 145-residue polypeptide: uncharacterized protein (145 aa).

The next 2 helical transmembrane spans lie at 20–40 (LIGP…GMFF) and 116–136 (MIML…VLSA).

It localises to the membrane. This is an uncharacterized protein from Saccharomyces cerevisiae (strain ATCC 204508 / S288c) (Baker's yeast).